The primary structure comprises 254 residues: Imidazole glycerol phosphate synthase subunit HisF (254 aa).

Residues D11 and D130 contribute to the active site.

This sequence belongs to the HisA/HisF family. As to quaternary structure, heterodimer of HisH and HisF.

It is found in the cytoplasm. It carries out the reaction 5-[(5-phospho-1-deoxy-D-ribulos-1-ylimino)methylamino]-1-(5-phospho-beta-D-ribosyl)imidazole-4-carboxamide + L-glutamine = D-erythro-1-(imidazol-4-yl)glycerol 3-phosphate + 5-amino-1-(5-phospho-beta-D-ribosyl)imidazole-4-carboxamide + L-glutamate + H(+). It functions in the pathway amino-acid biosynthesis; L-histidine biosynthesis; L-histidine from 5-phospho-alpha-D-ribose 1-diphosphate: step 5/9. IGPS catalyzes the conversion of PRFAR and glutamine to IGP, AICAR and glutamate. The HisF subunit catalyzes the cyclization activity that produces IGP and AICAR from PRFAR using the ammonia provided by the HisH subunit. This Oceanobacillus iheyensis (strain DSM 14371 / CIP 107618 / JCM 11309 / KCTC 3954 / HTE831) protein is Imidazole glycerol phosphate synthase subunit HisF.